The primary structure comprises 313 residues: MNVEPGFSSQFSVPGSWFLEYHHTPVLLAEVVAGLLPRPGGRYIDGTVGGGGHAAAILEASSPDGRLLGIDCDPAALAAAAARLAPYGDRVTLVRGSFREIGQLAATSGFVQVEGVVLDLGVSSYQLDTPERGFSFQAHAPLDMRLDPDAPVTAAHLVNNLPEQELADLIFRYGEERGSRRIARAIVEARQRKPVTTTDELAAIVTRALGGQRGRIHPATRTFQALRIAVNNELASLEAALPQIIDLLAPGGRMAIIAFHSLEDRIVKHTLRAEAQAGRLHIITRKPVEASIEEQRANPRSRSARLRVAERVS.

Residues 51-53 (GGH), Asp-71, Phe-98, Asp-119, and Gln-126 contribute to the S-adenosyl-L-methionine site. Positions 293–313 (EEQRANPRSRSARLRVAERVS) are disordered.

It belongs to the methyltransferase superfamily. RsmH family.

It localises to the cytoplasm. The catalysed reaction is cytidine(1402) in 16S rRNA + S-adenosyl-L-methionine = N(4)-methylcytidine(1402) in 16S rRNA + S-adenosyl-L-homocysteine + H(+). In terms of biological role, specifically methylates the N4 position of cytidine in position 1402 (C1402) of 16S rRNA. The chain is Ribosomal RNA small subunit methyltransferase H from Roseiflexus sp. (strain RS-1).